The following is a 236-amino-acid chain: Ubiquinone biosynthesis O-methyltransferase (236 aa).

Positions 40, 59, 80, and 124 each coordinate S-adenosyl-L-methionine.

The protein belongs to the methyltransferase superfamily. UbiG/COQ3 family.

It carries out the reaction a 3-demethylubiquinol + S-adenosyl-L-methionine = a ubiquinol + S-adenosyl-L-homocysteine + H(+). It catalyses the reaction a 3-(all-trans-polyprenyl)benzene-1,2-diol + S-adenosyl-L-methionine = a 2-methoxy-6-(all-trans-polyprenyl)phenol + S-adenosyl-L-homocysteine + H(+). It participates in cofactor biosynthesis; ubiquinone biosynthesis. Its function is as follows. O-methyltransferase that catalyzes the 2 O-methylation steps in the ubiquinone biosynthetic pathway. The polypeptide is Ubiquinone biosynthesis O-methyltransferase (Nitrosococcus oceani (strain ATCC 19707 / BCRC 17464 / JCM 30415 / NCIMB 11848 / C-107)).